We begin with the raw amino-acid sequence, 283 residues long: Acetylglutamate kinase (283 aa).

Residues 63-64 (GG), Arg-85, and Asn-178 contribute to the substrate site.

This sequence belongs to the acetylglutamate kinase family. ArgB subfamily.

The protein resides in the cytoplasm. It carries out the reaction N-acetyl-L-glutamate + ATP = N-acetyl-L-glutamyl 5-phosphate + ADP. It functions in the pathway amino-acid biosynthesis; L-arginine biosynthesis; N(2)-acetyl-L-ornithine from L-glutamate: step 2/4. Its function is as follows. Catalyzes the ATP-dependent phosphorylation of N-acetyl-L-glutamate. This chain is Acetylglutamate kinase, found in Prochlorococcus marinus (strain MIT 9312).